Reading from the N-terminus, the 153-residue chain is Histone H2B.10 (153 aa).

Composition is skewed to basic and acidic residues over residues 1–28 (MAPK…EKAP) and 36–53 (EKRL…EGKK). The tract at residues 1 to 61 (MAPKAEKKPA…KKAGRKKAKK (61 aa)) is disordered. Residues Lys7 and Lys37 each carry the N6-acetyllysine modification. Lys149 is covalently cross-linked (Glycyl lysine isopeptide (Lys-Gly) (interchain with G-Cter in ubiquitin)).

This sequence belongs to the histone H2B family. The nucleosome is a histone octamer containing two molecules each of H2A, H2B, H3 and H4 assembled in one H3-H4 heterotetramer and two H2A-H2B heterodimers. The octamer wraps approximately 147 bp of DNA. Can be acetylated to form H2BK6ac and H2BK33ac. Post-translationally, monoubiquitinated by BRE1 to form H2BK143ub1 and deubiquitinated by UBP26. Required for heterochromatic histone H3 di- and trimethylation at H3K4me. May give a specific tag for epigenetic transcriptional activation.

It localises to the nucleus. It is found in the chromosome. Functionally, core component of nucleosome. Nucleosomes wrap and compact DNA into chromatin, limiting DNA accessibility to the cellular machineries which require DNA as a template. Histones thereby play a central role in transcription regulation, DNA repair, DNA replication and chromosomal stability. DNA accessibility is regulated via a complex set of post-translational modifications of histones, also called histone code, and nucleosome remodeling. In Oryza sativa subsp. indica (Rice), this protein is Histone H2B.10 (H2B.10).